The primary structure comprises 529 residues: GTPase Obg (529 aa).

One can recognise an Obg domain in the interval 2-159; that stretch reads ASFVDRVVLH…SDIVLELKSI (158 aa). An OBG-type G domain is found at 160-343; it reads ADIALVGFPS…LGFAMAEIVK (184 aa). Residues 166–173, 191–195, 212–215, 295–298, and 324–326 each bind GTP; these read GFPSAGKS, FTTLI, DVPG, NKVD, and SAT. Ser173 and Thr193 together coordinate Mg(2+). Positions 363 to 447 constitute an OCT domain; that stretch reads PRAVNETGFR…DDGVVFDWEP (85 aa). Positions 461–529 are disordered; it reads GTDIRFADTG…ESGLDSGDES (69 aa). Positions 462–502 are enriched in basic and acidic residues; that stretch reads TDIRFADTGDRPTRSQKREEQQERRDAKAAARAELEAERKA.

This sequence belongs to the TRAFAC class OBG-HflX-like GTPase superfamily. OBG GTPase family. In terms of assembly, monomer. The cofactor is Mg(2+).

It localises to the cytoplasm. Functionally, an essential GTPase which binds GTP, GDP and possibly (p)ppGpp with moderate affinity, with high nucleotide exchange rates and a fairly low GTP hydrolysis rate. Plays a role in control of the cell cycle, stress response, ribosome biogenesis and in those bacteria that undergo differentiation, in morphogenesis control. The sequence is that of GTPase Obg from Pseudarthrobacter chlorophenolicus (strain ATCC 700700 / DSM 12829 / CIP 107037 / JCM 12360 / KCTC 9906 / NCIMB 13794 / A6) (Arthrobacter chlorophenolicus).